The primary structure comprises 531 residues: Putative cysteine ligase BshC (531 aa).

A coiled-coil region spans residues 447 to 481; sequence KAQEKKQTKGLDNLEKRLLKAEKKMHSEKLKKIIE.

Belongs to the BshC family.

In Flavobacterium psychrophilum (strain ATCC 49511 / DSM 21280 / CIP 103535 / JIP02/86), this protein is Putative cysteine ligase BshC.